Reading from the N-terminus, the 138-residue chain is Phosphoribosyl-AMP cyclohydrolase (138 aa).

D86 provides a ligand contact to Mg(2+). Zn(2+) is bound at residue C87. Mg(2+) contacts are provided by D88 and D90. Residues C104 and C111 each coordinate Zn(2+).

This sequence belongs to the PRA-CH family. As to quaternary structure, homodimer. Requires Mg(2+) as cofactor. Zn(2+) serves as cofactor.

It localises to the cytoplasm. The catalysed reaction is 1-(5-phospho-beta-D-ribosyl)-5'-AMP + H2O = 1-(5-phospho-beta-D-ribosyl)-5-[(5-phospho-beta-D-ribosylamino)methylideneamino]imidazole-4-carboxamide. The protein operates within amino-acid biosynthesis; L-histidine biosynthesis; L-histidine from 5-phospho-alpha-D-ribose 1-diphosphate: step 3/9. In terms of biological role, catalyzes the hydrolysis of the adenine ring of phosphoribosyl-AMP. The chain is Phosphoribosyl-AMP cyclohydrolase from Marinobacter nauticus (strain ATCC 700491 / DSM 11845 / VT8) (Marinobacter aquaeolei).